A 194-amino-acid polypeptide reads, in one-letter code: Imidazoleglycerol-phosphate dehydratase (194 aa).

Belongs to the imidazoleglycerol-phosphate dehydratase family.

The protein resides in the cytoplasm. It catalyses the reaction D-erythro-1-(imidazol-4-yl)glycerol 3-phosphate = 3-(imidazol-4-yl)-2-oxopropyl phosphate + H2O. It functions in the pathway amino-acid biosynthesis; L-histidine biosynthesis; L-histidine from 5-phospho-alpha-D-ribose 1-diphosphate: step 6/9. The chain is Imidazoleglycerol-phosphate dehydratase from Bacillus thuringiensis (strain Al Hakam).